We begin with the raw amino-acid sequence, 177 residues long: Large ribosomal subunit protein uL6 (177 aa).

It belongs to the universal ribosomal protein uL6 family. In terms of assembly, part of the 50S ribosomal subunit.

This protein binds to the 23S rRNA, and is important in its secondary structure. It is located near the subunit interface in the base of the L7/L12 stalk, and near the tRNA binding site of the peptidyltransferase center. This Brucella abortus (strain S19) protein is Large ribosomal subunit protein uL6.